The following is a 389-amino-acid chain: Alanine racemase (389 aa).

Lysine 48 serves as the catalytic Proton acceptor; specific for D-alanine. Lysine 48 carries the N6-(pyridoxal phosphate)lysine modification. Residue arginine 144 participates in substrate binding. Tyrosine 281 acts as the Proton acceptor; specific for L-alanine in catalysis. Methionine 329 is a substrate binding site.

It belongs to the alanine racemase family. The cofactor is pyridoxal 5'-phosphate.

It catalyses the reaction L-alanine = D-alanine. Its pathway is amino-acid biosynthesis; D-alanine biosynthesis; D-alanine from L-alanine: step 1/1. Its function is as follows. Catalyzes the interconversion of L-alanine and D-alanine. May also act on other amino acids. This chain is Alanine racemase (alr), found in Leptospira interrogans serogroup Icterohaemorrhagiae serovar copenhageni (strain Fiocruz L1-130).